We begin with the raw amino-acid sequence, 168 residues long: MPRSRINGNFIDKTFSIVADILLRVIPTTSGEKEAFTYYRDGMSAQSEGNYAEALQNYYEAMRLEIDPYDRSYILYNIGLIHTSNGEHTKALEYYFRALERNPFLPQAFNNMAVICHYRGEQAIQQGDSEIAEAWFDQAAEYWKQAIALTPGNYIEARNWLKITRRFE.

TPR repeat units follow at residues 35 to 68 (AFTY…EIDP), 72 to 105 (SYIL…NPFL), and 120 to 153 (GEQA…TPGN).

It belongs to the Ycf3 family.

It is found in the plastid. Its subcellular location is the chloroplast thylakoid membrane. Its function is as follows. Essential for the assembly of the photosystem I (PSI) complex. May act as a chaperone-like factor to guide the assembly of the PSI subunits. The protein is Photosystem I assembly protein Ycf3 of Solanum lycopersicum (Tomato).